Reading from the N-terminus, the 140-residue chain is Sec-independent protein translocase protein TatB (140 aa).

A helical transmembrane segment spans residues 1–21 (MFDIGFSELLLIAVVALVVLG). Residues 119 to 140 (VHVTSPPPSTSTHGNNGQEKSQ) form a disordered region. Residues 128-140 (TSTHGNNGQEKSQ) are compositionally biased toward polar residues.

Belongs to the TatB family. As to quaternary structure, the Tat system comprises two distinct complexes: a TatABC complex, containing multiple copies of TatA, TatB and TatC subunits, and a separate TatA complex, containing only TatA subunits. Substrates initially bind to the TatABC complex, which probably triggers association of the separate TatA complex to form the active translocon.

The protein localises to the cell inner membrane. In terms of biological role, part of the twin-arginine translocation (Tat) system that transports large folded proteins containing a characteristic twin-arginine motif in their signal peptide across membranes. Together with TatC, TatB is part of a receptor directly interacting with Tat signal peptides. TatB may form an oligomeric binding site that transiently accommodates folded Tat precursor proteins before their translocation. The sequence is that of Sec-independent protein translocase protein TatB from Xylella fastidiosa (strain 9a5c).